A 248-amino-acid chain; its full sequence is Probable transcriptional regulatory protein Pfl01_4410 (248 aa).

The protein belongs to the TACO1 family.

The protein localises to the cytoplasm. This is Probable transcriptional regulatory protein Pfl01_4410 from Pseudomonas fluorescens (strain Pf0-1).